Consider the following 325-residue polypeptide: Protein translocase subunit SecF (325 aa).

The next 6 helical transmembrane spans lie at 36-56, 148-168, 175-197, 202-224, 254-274, and 281-301; these read GYIL…TKGF, LAQG…IYVG, LGFG…FSAL, DLTF…IVVF, TIIT…FGGP, and LALL…AIAI.

The protein belongs to the SecD/SecF family. SecF subfamily. Forms a complex with SecD. Part of the essential Sec protein translocation apparatus which comprises SecA, SecYEG and auxiliary proteins SecDF-YajC and YidC.

It is found in the cell inner membrane. Functionally, part of the Sec protein translocase complex. Interacts with the SecYEG preprotein conducting channel. SecDF uses the proton motive force (PMF) to complete protein translocation after the ATP-dependent function of SecA. The polypeptide is Protein translocase subunit SecF (Haemophilus influenzae (strain ATCC 51907 / DSM 11121 / KW20 / Rd)).